Reading from the N-terminus, the 146-residue chain is Large ribosomal subunit protein uL15 (146 aa).

The interval 18-45 is disordered; the sequence is VLGRGLGCGKGKTSGRGHKGQKARSGCA. A compositionally biased stretch (basic residues) spans 30-39; it reads TSGRGHKGQK.

The protein belongs to the universal ribosomal protein uL15 family. Part of the 50S ribosomal subunit.

In terms of biological role, binds to the 23S rRNA. This is Large ribosomal subunit protein uL15 from Anaplasma marginale (strain St. Maries).